The sequence spans 478 residues: RNA exonuclease 3 (478 aa).

Residues Val320 to Ile465 enclose the Exonuclease domain.

Belongs to the REXO1/REXO3 family.

It localises to the cytoplasm. The protein localises to the nucleus. Functionally, 3' to 5' exoribonuclease required for proper 3' end maturation of MRP RNA and of the U5L snRNA. This Kluyveromyces lactis (strain ATCC 8585 / CBS 2359 / DSM 70799 / NBRC 1267 / NRRL Y-1140 / WM37) (Yeast) protein is RNA exonuclease 3 (REX3).